The chain runs to 233 residues: MKTESLTISLEEMMEAGVHFGHQTRKWNPKMAPYIFTKRRGIYILHIFKTARLLAEACEFSANAASQGKQFLIVGTKYQAADLVSAAAKKARCHYVNQKWLGGMLTNWSTIETRVTRLKQLEDQENAGVLNQLPKKEAAVLKRQLIQLRKYLEGIKYMTRLPDIVIIIDQQKEATAVEECIKLGIPTICLVDTDCDPDLTDMPIPANDDARSSIRWILDKLTTAIREGRNRVT.

This sequence belongs to the universal ribosomal protein uS2 family.

It localises to the plastid. The protein localises to the chloroplast. This chain is Small ribosomal subunit protein uS2c (rps2), found in Staurastrum punctulatum (Green alga).